Consider the following 909-residue polypeptide: Protein translocase subunit SecA (909 aa).

Residues Gln-87, 105–109 (GEGKT), and Asp-513 each bind ATP. The interval 834 to 909 (QEEVERMEEQ…KYKQCHGKID (76 aa)) is disordered. The span at 836–853 (EVERMEEQRRAQAEEAAR) shows a compositional bias: basic and acidic residues. Residues 854–863 (RAQAQHAAAQ) are compositionally biased toward low complexity. Positions 874-889 (EGAHQPMVREERKVGR) are enriched in basic and acidic residues. Zn(2+) is bound by residues Cys-893, Cys-895, Cys-904, and His-905. Over residues 899 to 909 (KKYKQCHGKID) the composition is skewed to basic residues.

This sequence belongs to the SecA family. In terms of assembly, monomer and homodimer. Part of the essential Sec protein translocation apparatus which comprises SecA, SecYEG and auxiliary proteins SecDF-YajC and YidC. The cofactor is Zn(2+).

The protein localises to the cell inner membrane. It localises to the cytoplasm. The enzyme catalyses ATP + H2O + cellular proteinSide 1 = ADP + phosphate + cellular proteinSide 2.. Its function is as follows. Part of the Sec protein translocase complex. Interacts with the SecYEG preprotein conducting channel. Has a central role in coupling the hydrolysis of ATP to the transfer of proteins into and across the cell membrane, serving both as a receptor for the preprotein-SecB complex and as an ATP-driven molecular motor driving the stepwise translocation of polypeptide chains across the membrane. The protein is Protein translocase subunit SecA of Vibrio campbellii (strain ATCC BAA-1116).